A 558-amino-acid chain; its full sequence is Arginine--tRNA ligase (558 aa).

A 'HIGH' region motif is present at residues 134–144 (ANPTGPMVLVQ).

It belongs to the class-I aminoacyl-tRNA synthetase family. In terms of assembly, monomer.

It localises to the cytoplasm. The enzyme catalyses tRNA(Arg) + L-arginine + ATP = L-arginyl-tRNA(Arg) + AMP + diphosphate. The protein is Arginine--tRNA ligase of Symbiobacterium thermophilum (strain DSM 24528 / JCM 14929 / IAM 14863 / T).